Here is a 966-residue protein sequence, read N- to C-terminus: Valine--tRNA ligase (966 aa).

A 'HIGH' region motif is present at residues 48–58 (PNITGGLHLGH). Residues 348-368 (DYKDARKKIIEECKRLKILED) adopt a coiled-coil conformation. The 'KMSKS' region motif lies at 566–570 (KMSKS). Lysine 569 contributes to the ATP binding site. Residues 939–960 (FKKSQEKLNHYNKTKNKLLNQY) are a coiled coil.

Belongs to the class-I aminoacyl-tRNA synthetase family. ValS type 1 subfamily. In terms of assembly, monomer.

Its subcellular location is the cytoplasm. The catalysed reaction is tRNA(Val) + L-valine + ATP = L-valyl-tRNA(Val) + AMP + diphosphate. Its function is as follows. Catalyzes the attachment of valine to tRNA(Val). As ValRS can inadvertently accommodate and process structurally similar amino acids such as threonine, to avoid such errors, it has a 'posttransfer' editing activity that hydrolyzes mischarged Thr-tRNA(Val) in a tRNA-dependent manner. The polypeptide is Valine--tRNA ligase (Blochmanniella floridana).